Reading from the N-terminus, the 541-residue chain is CTP synthase (541 aa).

The segment at 1–265 (MTRFIFITGG…DAVVCRHFGL (265 aa)) is amidoligase domain. Ser13 contacts CTP. A UTP-binding site is contributed by Ser13. Residue 14–19 (SLGKGL) coordinates ATP. Tyr54 provides a ligand contact to L-glutamine. Asp71 contacts ATP. Mg(2+)-binding residues include Asp71 and Glu139. CTP contacts are provided by residues 146–148 (DIE), 186–191 (KTKPTQ), and Lys222. UTP is bound by residues 186-191 (KTKPTQ) and Lys222. The 251-residue stretch at 290-540 (TIAIVGKYIS…IAAAVRQSRL (251 aa)) folds into the Glutamine amidotransferase type-1 domain. Position 352 (Gly352) interacts with L-glutamine. Cys379 (nucleophile; for glutamine hydrolysis) is an active-site residue. L-glutamine-binding positions include 380 to 383 (FGMQ), Glu403, and Arg468. Active-site residues include His513 and Glu515.

The protein belongs to the CTP synthase family. Homotetramer.

It catalyses the reaction UTP + L-glutamine + ATP + H2O = CTP + L-glutamate + ADP + phosphate + 2 H(+). The enzyme catalyses L-glutamine + H2O = L-glutamate + NH4(+). The catalysed reaction is UTP + NH4(+) + ATP = CTP + ADP + phosphate + 2 H(+). Its pathway is pyrimidine metabolism; CTP biosynthesis via de novo pathway; CTP from UDP: step 2/2. Its activity is regulated as follows. Allosterically activated by GTP, when glutamine is the substrate; GTP has no effect on the reaction when ammonia is the substrate. The allosteric effector GTP functions by stabilizing the protein conformation that binds the tetrahedral intermediate(s) formed during glutamine hydrolysis. Inhibited by the product CTP, via allosteric rather than competitive inhibition. Catalyzes the ATP-dependent amination of UTP to CTP with either L-glutamine or ammonia as the source of nitrogen. Regulates intracellular CTP levels through interactions with the four ribonucleotide triphosphates. This chain is CTP synthase, found in Paramagnetospirillum magneticum (strain ATCC 700264 / AMB-1) (Magnetospirillum magneticum).